A 116-amino-acid chain; its full sequence is MRAIITFALFCVLYITVQAKTSSPKVQVYSHFPGEYGKENTLICHVSGFHPPDITIELLRNGEILPNTQQTDLAFEKGRQFHLTKSVSFTPERGLDYACKVRHMSNTNAYSWEPNM.

The first 19 residues, 1–19 (MRAIITFALFCVLYITVQA), serve as a signal peptide directing secretion. One can recognise an Ig-like C1-type domain in the interval 24–111 (PKVQVYSHFP…RHMSNTNAYS (88 aa)). C44 and C99 are joined by a disulfide.

Belongs to the beta-2-microglobulin family. Heterodimer of an alpha chain and a beta chain. Beta-2-microglobulin is the beta-chain of major histocompatibility complex class I molecules.

It is found in the secreted. In terms of biological role, component of the class I major histocompatibility complex (MHC). Involved in the presentation of peptide antigens to the immune system. The sequence is that of Beta-2-microglobulin (b2m) from Labeobarbus intermedius (Lake tana barbels).